A 769-amino-acid chain; its full sequence is Elongation factor G, mitochondrial (769 aa).

Residues 1 to 42 (MSKFLRGISSISSASLKARASNFGVFHGVCSARNLHQSRLCL) constitute a mitochondrion transit peptide. The 283-residue stretch at 74–356 (TRLRNIGVSA…AVVDYLPQPN (283 aa)) folds into the tr-type G domain. GTP is bound by residues 83–90 (AHIDSGKT), 154–158 (DTPGH), and 208–211 (NKMD).

The protein belongs to the TRAFAC class translation factor GTPase superfamily. Classic translation factor GTPase family. EF-G/EF-2 subfamily.

It is found in the mitochondrion. The protein operates within protein biosynthesis; polypeptide chain elongation. Mitochondrial GTPase that catalyzes the GTP-dependent ribosomal translocation step during translation elongation. During this step, the ribosome changes from the pre-translocational (PRE) to the post-translocational (POST) state as the newly formed A-site-bound peptidyl-tRNA and P-site-bound deacylated tRNA move to the P and E sites, respectively. Catalyzes the coordinated movement of the two tRNA molecules, the mRNA and conformational changes in the ribosome. The polypeptide is Elongation factor G, mitochondrial (Debaryomyces hansenii (strain ATCC 36239 / CBS 767 / BCRC 21394 / JCM 1990 / NBRC 0083 / IGC 2968) (Yeast)).